The primary structure comprises 445 residues: MSAIQSTQELLQPIGFDTPVAESKTVLLSPGKEWRARIPAESKLTIKIVYGIAELFGTELANGVEYTIQCANIAVYSVDHVKLEWKSLDELETTVSPDTNMPYLYNLHFALEKMRLSSFDGPRILVVGKASSGKTSLCKILCSYALKSKAYTPIYVNLNPQEGAFSPPGFLTATPISDILDVESTMWGQSMTTGATKLHNKQPMVKNFGLEMIAENRPLYMEVLGQLAQTVDGRLKNDPLVRRSGVIVDSPPLQHLDESYTELEVAITKFNIKTLVVCAPDDSLAVELSDRFQTLVRSIVRIPTSRGICNIDDVARRALQRSQIREYFYGNGSTVLSPYTIGVDLLDAVVWRPKSSLTIDMSKTSPNMVELERVEVTAANLQHALVAITYAPRKSTAEEVFRSGVLGVALITEVNDAKRKMRILLPVPGRLPDKAMILTAYRYLE.

ATP-binding positions include glutamate 33 and 131-136; that span reads SSGKTS.

This sequence belongs to the Clp1 family. Clp1 subfamily. As to quaternary structure, component of a pre-mRNA cleavage factor complex. Interacts directly with PCF11.

The protein resides in the nucleus. In terms of biological role, required for endonucleolytic cleavage during polyadenylation-dependent pre-mRNA 3'-end formation. This chain is mRNA cleavage and polyadenylation factor CLP1, found in Eremothecium gossypii (strain ATCC 10895 / CBS 109.51 / FGSC 9923 / NRRL Y-1056) (Yeast).